The chain runs to 177 residues: Peptide methionine sulfoxide reductase MsrA (177 aa).

Cysteine 11 is an active-site residue.

It belongs to the MsrA Met sulfoxide reductase family.

It catalyses the reaction L-methionyl-[protein] + [thioredoxin]-disulfide + H2O = L-methionyl-(S)-S-oxide-[protein] + [thioredoxin]-dithiol. The enzyme catalyses [thioredoxin]-disulfide + L-methionine + H2O = L-methionine (S)-S-oxide + [thioredoxin]-dithiol. Functionally, has an important function as a repair enzyme for proteins that have been inactivated by oxidation. Catalyzes the reversible oxidation-reduction of methionine sulfoxide in proteins to methionine. The sequence is that of Peptide methionine sulfoxide reductase MsrA from Trichodesmium erythraeum (strain IMS101).